Here is a 1550-residue protein sequence, read N- to C-terminus: Protein TIME FOR COFFEE (1550 aa).

10 disordered regions span residues 1–191, 207–304, 325–505, 708–736, 779–805, 859–1023, 1086–1130, 1163–1196, 1213–1296, and 1321–1435; these read MDRN…PVSP, VPRK…PVAV, TSKQ…SERG, QGSV…TAQR, RPPN…SATP, FNGS…KAGV, ASLE…QSIA, ALPQ…SQQP, AASA…SVAA, and NSKP…PKHG. Over residues 43-80 the composition is skewed to basic and acidic residues; that stretch reads EAARLRDRGGSNKKDRDRERDRDRERERERDRERDRLN. Positions 100–118 are enriched in acidic residues; it reads DGGDDSSEESVNDDEEYDD. Low complexity predominate over residues 134–151; it reads SNNISAASFSSSLSNHHN. The span at 157–171 shows a compositional bias: basic residues; that stretch reads LHHHHHSHNNNHQRK. The segment covering 241–250 has biased composition (polar residues); sequence RQISSTSPAN. Low complexity predominate over residues 292–301; that stretch reads KSSSSKLSSP. Over residues 348-366 the composition is skewed to polar residues; that stretch reads RVSSPISNPQTLPQSSITL. Residues 367 to 379 show a composition bias toward low complexity; it reads AANSSSSNVSAIA. Residues 409 to 432 show a composition bias toward polar residues; it reads SKSQVPFSNQLKSSGSGEGNSSVL. Basic and acidic residues-rich tracts occupy residues 447–461 and 473–490; these read DSEK…DETI and SDGE…KFEI. Composition is skewed to polar residues over residues 713–736, 783–803, and 884–992; these read GRSS…TAQR, SGIT…SASA, and LTGQ…NLGL. Residues 1112 to 1126 show a composition bias toward gly residues; that stretch reads SGGGAIGKTSGGNGG. Polar residues predominate over residues 1164–1173; it reads LPQSSGSLPT. Over residues 1174 to 1195 the composition is skewed to low complexity; that stretch reads SHHQQLLQQQQQQHMQRSQSQQ. The span at 1234–1253 shows a compositional bias: polar residues; that stretch reads NMTTSPAGTTKFANANSGFP. The segment covering 1254–1273 has biased composition (low complexity); the sequence is QNLVQSSSNQVQSQQWKNNS. Composition is skewed to polar residues over residues 1274–1296, 1321–1342, and 1351–1360; these read PRTT…SVAA, NSKP…NHQA, and SPSTSSVSKN. The segment covering 1361 to 1382 has biased composition (low complexity); the sequence is ASGSPRTTASASSAANKGGQAS. Composition is skewed to polar residues over residues 1383–1397 and 1405–1419; these read TTTH…NLQP and GGRN…NPTT. A compositionally biased stretch (low complexity) spans 1420–1435; that stretch reads SSGSKSQQQQQLPKHG.

In terms of assembly, interacts with MYC2.

Its subcellular location is the nucleus. Functionally, regulator of normal clock function. Acts in the mid to late night. Contributes to the amplitude of circadian clocks. May act on the transcriptional induction of LATE ELONGATED HYPOCOTYL (LHY). Inhibits MYC2 protein accumulation, acting as a negative factor in the JA-signaling pathway. This chain is Protein TIME FOR COFFEE (TIC), found in Arabidopsis thaliana (Mouse-ear cress).